Reading from the N-terminus, the 466-residue chain is Peptidoglycan-N-acetylglucosamine deacetylase PgdA (466 aa).

The Cytoplasmic segment spans residues 1 to 5; sequence MKIRW. Residues 6–26 form a helical membrane-spanning segment; the sequence is IRLSLVAILIIAVVFIGVIGF. Residues 27-466 are Extracellular-facing; it reads QKYQFSKSRN…FDKTDSRMVK (440 aa). Positions 266-440 constitute a NodB homology domain; that stretch reads KRIALTFDDG…KLKSQGYEFV (175 aa). Asp273 serves as the catalytic Proton acceptor. 3 residues coordinate Zn(2+): Asp274, His324, and His328. Tyr365 serves as a coordination point for substrate. Residue His415 is the Proton donor of the active site.

As to quaternary structure, homodimer. Interacts (via transmembrane domain) with PbpA1 (via transmembrane domain); the interaction is important for the peptidoglycan N-deacetylase function of this protein. Requires Zn(2+) as cofactor.

The protein localises to the cell membrane. Its subcellular location is the secreted. The protein resides in the cell wall. It carries out the reaction peptidoglycan-N-acetyl-D-glucosamine + H2O = peptidoglycan-D-glucosamine + acetate.. Catalyzes the deacetylation of N-acetylglucosamine (GlcNAc) residues in peptidoglycan (PG). Also deacetylates N-acetylated PG. Does not deacetylate N-acetylmuramic acid. Confers host lysozyme resistance. Critical for virulence and escape from innate immune response of the host. Required for intracellular survival of bacteria in macrophages of the host. Required for successful host colonization. Controls the production of inflammatory mediators in the bone marrow derived macrophages (BMMs) of the infected mouse. Suppresses Toll-like receptor 2 (TLR2)-dependent secretion of interleukin 6 (IL-6) and interferon-beta (IFN-beta) in the macrophages of the infected mouse. May decrease accessibility of pattern recognition receptors (PRRs) such as nucleotide-binding oligomerization domain protein (NOD) 1 of the host to the bacterial cell wall components. Protects cells from autolysis induced by lysozyme or by other autolysis-inducing agents. This Listeria monocytogenes serotype 1/2a (strain 10403S) protein is Peptidoglycan-N-acetylglucosamine deacetylase PgdA.